Here is a 155-residue protein sequence, read N- to C-terminus: Reticulon-like protein B23 (155 aa).

The Reticulon domain occupies 1–155 (MGEMGKAIGL…LNRRNGEILD (155 aa)). 2 consecutive transmembrane segments (helical) span residues 30–50 (SLISDVLIVLLSSLAILGLLF) and 117–137 (IISGVTIAYAGLCLFCLSMLF).

The protein resides in the endoplasmic reticulum membrane. This chain is Reticulon-like protein B23 (RTNLB23), found in Arabidopsis thaliana (Mouse-ear cress).